The following is a 281-amino-acid chain: Nucleotide-binding protein TRQ2_1124 (281 aa).

9–16 provides a ligand contact to ATP; sequence GLSGAGKT. Residue 58 to 61 coordinates GTP; that stretch reads DVRS.

The protein belongs to the RapZ-like family.

In terms of biological role, displays ATPase and GTPase activities. In Thermotoga sp. (strain RQ2), this protein is Nucleotide-binding protein TRQ2_1124.